The chain runs to 184 residues: Elongation factor P (184 aa).

The protein belongs to the elongation factor P family.

The protein resides in the cytoplasm. Its pathway is protein biosynthesis; polypeptide chain elongation. Its function is as follows. Involved in peptide bond synthesis. Stimulates efficient translation and peptide-bond synthesis on native or reconstituted 70S ribosomes in vitro. Probably functions indirectly by altering the affinity of the ribosome for aminoacyl-tRNA, thus increasing their reactivity as acceptors for peptidyl transferase. The protein is Elongation factor P of Variovorax paradoxus (strain S110).